The chain runs to 445 residues: MNHERSRGLYDRALSVMPGGVNSSVRATMPHPFFIERGDGGHVIDADGNRYVDWVMGYGPLLYGHDLPDPVQAAIQSHVAAGPMYGAPTEIEVEHAEFVARHVPSVESIRFVNSGTEATVSAVRLARGHTGRDKIVVMQGGYHGAQESTLVEGSPGDAHPSTKGIPESFAEHTLPIPFNDPQAAKKVFAEHGDDIAAVLVEPILANMGIVTPIDGYHETLRDLCDDHDSLLVFDEVITGFRVGGLGCAQSKFGVTPDVTTFGKIIGGGFPVGAIGGQAEIIEEFTPAGDVFQSGTFSGHPVTMAAGKASLEYAAENDVYEHVNRLGRKLREGITEICTERAPEYTVVGTDSMFKTIFTRDAPDDPDACCAGGCRQNPDCDRYDTCPKNGADVARAATDRWERVFWQEMKEQGVFLTANQFECQFTSYAHTEEDVEETLAAYREAI.

Lys-263 is subject to N6-(pyridoxal phosphate)lysine.

The protein belongs to the class-III pyridoxal-phosphate-dependent aminotransferase family. HemL subfamily. It depends on pyridoxal 5'-phosphate as a cofactor.

The protein localises to the cytoplasm. It catalyses the reaction (S)-4-amino-5-oxopentanoate = 5-aminolevulinate. Its pathway is porphyrin-containing compound metabolism; protoporphyrin-IX biosynthesis; 5-aminolevulinate from L-glutamyl-tRNA(Glu): step 2/2. The chain is Glutamate-1-semialdehyde 2,1-aminomutase from Halorubrum lacusprofundi (strain ATCC 49239 / DSM 5036 / JCM 8891 / ACAM 34).